The following is a 264-amino-acid chain: Thymidylate synthase (264 aa).

Arginine 21 provides a ligand contact to dUMP. Histidine 51 contacts (6R)-5,10-methylene-5,6,7,8-tetrahydrofolate. A dUMP-binding site is contributed by 126 to 127 (RR). Cysteine 146 functions as the Nucleophile in the catalytic mechanism. Residues 166-169 (RSAD), asparagine 177, and 207-209 (HIY) contribute to the dUMP site. Aspartate 169 contributes to the (6R)-5,10-methylene-5,6,7,8-tetrahydrofolate binding site. A (6R)-5,10-methylene-5,6,7,8-tetrahydrofolate-binding site is contributed by serine 263.

The protein belongs to the thymidylate synthase family. Bacterial-type ThyA subfamily. In terms of assembly, homodimer.

The protein localises to the cytoplasm. It catalyses the reaction dUMP + (6R)-5,10-methylene-5,6,7,8-tetrahydrofolate = 7,8-dihydrofolate + dTMP. It participates in pyrimidine metabolism; dTTP biosynthesis. Its function is as follows. Catalyzes the reductive methylation of 2'-deoxyuridine-5'-monophosphate (dUMP) to 2'-deoxythymidine-5'-monophosphate (dTMP) while utilizing 5,10-methylenetetrahydrofolate (mTHF) as the methyl donor and reductant in the reaction, yielding dihydrofolate (DHF) as a by-product. This enzymatic reaction provides an intracellular de novo source of dTMP, an essential precursor for DNA biosynthesis. The protein is Thymidylate synthase of Phocaeicola vulgatus (strain ATCC 8482 / DSM 1447 / JCM 5826 / CCUG 4940 / NBRC 14291 / NCTC 11154) (Bacteroides vulgatus).